The primary structure comprises 483 residues: Probable cytosol aminopeptidase (483 aa).

Lysine 245 and aspartate 250 together coordinate Mn(2+). The active site involves lysine 257. Mn(2+)-binding residues include aspartate 268, aspartate 327, and glutamate 329. Arginine 331 is a catalytic residue.

This sequence belongs to the peptidase M17 family. Mn(2+) serves as cofactor.

It localises to the cytoplasm. The enzyme catalyses Release of an N-terminal amino acid, Xaa-|-Yaa-, in which Xaa is preferably Leu, but may be other amino acids including Pro although not Arg or Lys, and Yaa may be Pro. Amino acid amides and methyl esters are also readily hydrolyzed, but rates on arylamides are exceedingly low.. It carries out the reaction Release of an N-terminal amino acid, preferentially leucine, but not glutamic or aspartic acids.. Functionally, presumably involved in the processing and regular turnover of intracellular proteins. Catalyzes the removal of unsubstituted N-terminal amino acids from various peptides. The chain is Probable cytosol aminopeptidase from Wolinella succinogenes (strain ATCC 29543 / DSM 1740 / CCUG 13145 / JCM 31913 / LMG 7466 / NCTC 11488 / FDC 602W) (Vibrio succinogenes).